Here is a 255-residue protein sequence, read N- to C-terminus: Hydroxyacylglutathione hydrolase (255 aa).

His-56, His-58, Asp-60, His-61, His-114, Asp-133, and His-171 together coordinate Zn(2+).

Belongs to the metallo-beta-lactamase superfamily. Glyoxalase II family. Monomer. Zn(2+) serves as cofactor.

The catalysed reaction is an S-(2-hydroxyacyl)glutathione + H2O = a 2-hydroxy carboxylate + glutathione + H(+). It functions in the pathway secondary metabolite metabolism; methylglyoxal degradation; (R)-lactate from methylglyoxal: step 2/2. Functionally, thiolesterase that catalyzes the hydrolysis of S-D-lactoyl-glutathione to form glutathione and D-lactic acid. The chain is Hydroxyacylglutathione hydrolase from Cereibacter sphaeroides (strain ATCC 17025 / ATH 2.4.3) (Rhodobacter sphaeroides).